Reading from the N-terminus, the 62-residue chain is Probable tautomerase SH1546 (62 aa).

Catalysis depends on Pro-2, which acts as the Proton acceptor; via imino nitrogen.

Belongs to the 4-oxalocrotonate tautomerase family.

The polypeptide is Probable tautomerase SH1546 (Staphylococcus haemolyticus (strain JCSC1435)).